The following is an 813-amino-acid chain: Sorting nexin-29 (813 aa).

Positions 36-180 (SDSDSRVTCL…ILFAINIDNK (145 aa)) constitute an RUN domain. Phosphoserine occurs at positions 268, 291, 292, 330, and 344. Residues 269-299 (FDDEEDEQNSGDVFKKTPGAGESSEDNSDRS) are disordered. Positions 346–357 (DDEDVDENEDDV) are enriched in acidic residues. The disordered stretch occupies residues 346-378 (DDEDVDENEDDVYGNSSGRKHRGHSESPEKPLE). Phosphoserine is present on residues serine 445 and serine 450. A coiled-coil region spans residues 466-545 (TISELRQATV…VLKVQLKKYV (80 aa)). A Phosphoserine modification is found at serine 639. A Phosphothreonine modification is found at threonine 641. Residues serine 642 and serine 646 each carry the phosphoserine modification. Residues 656-779 (ALINVWIPSV…PFFVDITPPG (124 aa)) form the PX domain. A disordered region spans residues 778–813 (PGEPVNSRPKAASRFPKLSRGQPRETRNVEPQSGDL).

Belongs to the sorting nexin family.

This chain is Sorting nexin-29 (SNX29), found in Homo sapiens (Human).